The primary structure comprises 185 residues: Lysozyme g (185 aa).

2 disulfides stabilise this stretch: Cys4/Cys60 and Cys18/Cys29. Glu73 is a catalytic residue.

Belongs to the glycosyl hydrolase 23 family.

The protein localises to the secreted. It catalyses the reaction Hydrolysis of (1-&gt;4)-beta-linkages between N-acetylmuramic acid and N-acetyl-D-glucosamine residues in a peptidoglycan and between N-acetyl-D-glucosamine residues in chitodextrins.. This is Lysozyme g from Cygnus atratus (Black swan).